The sequence spans 579 residues: Arginine--tRNA ligase (579 aa).

Positions 123–133 (ANPTGPVHVGR) match the 'HIGH' region motif.

The protein belongs to the class-I aminoacyl-tRNA synthetase family.

It localises to the cytoplasm. The enzyme catalyses tRNA(Arg) + L-arginine + ATP = L-arginyl-tRNA(Arg) + AMP + diphosphate. The protein is Arginine--tRNA ligase of Haloarcula marismortui (strain ATCC 43049 / DSM 3752 / JCM 8966 / VKM B-1809) (Halobacterium marismortui).